The sequence spans 415 residues: Lipid II:glycine glycyltransferase (415 aa).

The protein belongs to the FemABX family.

The protein resides in the cytoplasm. The enzyme catalyses beta-D-GlcNAc-(1-&gt;4)-Mur2Ac(oyl-L-Ala-D-isoglutaminyl-L-Lys-D-Ala-D-Ala)-di-trans,octa-cis-undecaprenyl diphosphate + glycyl-tRNA(Gly) = beta-D-GlcNAc-(1-&gt;4)-Mur2Ac(oyl-L-Ala-D-isoglutaminyl-L-Lys-(N(6)-Gly)-D-Ala-D-Ala)-di-trans,octa-cis-undecaprenyl diphosphate + tRNA(Gly) + H(+). Functionally, catalyzes the incorporation of amino acid(s) into the interchain peptide bridge of peptidoglycan, using aminoacyl-tRNA as amino acid donor. This Staphylococcus saprophyticus subsp. saprophyticus (strain ATCC 15305 / DSM 20229 / NCIMB 8711 / NCTC 7292 / S-41) protein is Lipid II:glycine glycyltransferase (femX).